Here is a 238-residue protein sequence, read N- to C-terminus: Peroxisomal biogenesis factor 11 (238 aa).

It belongs to the peroxin-11 family.

Its subcellular location is the mitochondrion. The protein localises to the peroxisome membrane. Functionally, involved in peroxisomal proliferation. Promotes peroxisome division and biogenesis. The chain is Peroxisomal biogenesis factor 11 (pex11) from Schizosaccharomyces pombe (strain 972 / ATCC 24843) (Fission yeast).